The following is a 400-amino-acid chain: tRNA-specific 2-thiouridylase MnmA (400 aa).

ATP-binding positions include 19-26 (AMSGGVDS) and Leu-45. Cys-113 serves as the catalytic Nucleophile. The cysteines at positions 113 and 210 are disulfide-linked. Residue Gly-137 coordinates ATP. Residues 160-162 (RDQ) are interaction with tRNA. Cys-210 functions as the Cysteine persulfide intermediate in the catalytic mechanism.

This sequence belongs to the MnmA/TRMU family.

It localises to the cytoplasm. The enzyme catalyses S-sulfanyl-L-cysteinyl-[protein] + uridine(34) in tRNA + AH2 + ATP = 2-thiouridine(34) in tRNA + L-cysteinyl-[protein] + A + AMP + diphosphate + H(+). Catalyzes the 2-thiolation of uridine at the wobble position (U34) of tRNA, leading to the formation of s(2)U34. The polypeptide is tRNA-specific 2-thiouridylase MnmA (Rhodopseudomonas palustris (strain BisA53)).